The following is a 407-amino-acid chain: Magnesium-protoporphyrin IX monomethyl ester [oxidative] cyclase 1, chloroplastic (407 aa).

Positions 1 to 10 are enriched in polar residues; the sequence is MQTTLKQQRA. The tract at residues 1–28 is disordered; that stretch reads MQTTLKQQRASGRVSARQPFRSAAVARP.

Belongs to the AcsF family. The cofactor is Fe cation.

The protein localises to the plastid. The protein resides in the chloroplast thylakoid membrane. It catalyses the reaction Mg-protoporphyrin IX 13-monomethyl ester + 3 NADPH + 3 O2 + 2 H(+) = 3,8-divinyl protochlorophyllide a + 3 NADP(+) + 5 H2O. It functions in the pathway porphyrin-containing compound metabolism; chlorophyll biosynthesis. Its function is as follows. Catalyzes the formation of the isocyclic ring in chlorophyll biosynthesis under oxygen- and copper-deficient conditions. Mediates the cyclase reaction, which results in the formation of divinylprotochlorophyllide (Pchlide) characteristic of all chlorophylls from magnesium-protoporphyrin IX 13-monomethyl ester (MgPMME). In Chlamydomonas reinhardtii (Chlamydomonas smithii), this protein is Magnesium-protoporphyrin IX monomethyl ester [oxidative] cyclase 1, chloroplastic (CRD1).